The chain runs to 388 residues: Succinate--CoA ligase [ADP-forming] subunit beta (388 aa).

The ATP-grasp domain occupies 9–244 (KAIFRSMGVA…LEEEDPKEIE (236 aa)). Residues K46, 53-55 (GRG), E99, C102, and E107 each bind ATP. Residues N199 and D213 each coordinate Mg(2+). Substrate is bound by residues N264 and 321–323 (GIM).

Belongs to the succinate/malate CoA ligase beta subunit family. Heterotetramer of two alpha and two beta subunits. Requires Mg(2+) as cofactor.

The enzyme catalyses succinate + ATP + CoA = succinyl-CoA + ADP + phosphate. It carries out the reaction GTP + succinate + CoA = succinyl-CoA + GDP + phosphate. It participates in carbohydrate metabolism; tricarboxylic acid cycle; succinate from succinyl-CoA (ligase route): step 1/1. Functionally, succinyl-CoA synthetase functions in the citric acid cycle (TCA), coupling the hydrolysis of succinyl-CoA to the synthesis of either ATP or GTP and thus represents the only step of substrate-level phosphorylation in the TCA. The beta subunit provides nucleotide specificity of the enzyme and binds the substrate succinate, while the binding sites for coenzyme A and phosphate are found in the alpha subunit. In Staphylococcus saprophyticus subsp. saprophyticus (strain ATCC 15305 / DSM 20229 / NCIMB 8711 / NCTC 7292 / S-41), this protein is Succinate--CoA ligase [ADP-forming] subunit beta.